Reading from the N-terminus, the 678-residue chain is Endopolyphosphatase (678 aa).

The Cytoplasmic portion of the chain corresponds to 1–2 (MR). Residues 3 to 23 (SPLLASLFALALSIASSEAAI) traverse the membrane as a helical; Signal-anchor for type II membrane protein segment. Topologically, residues 24–678 (SSTEQVPLSG…ELMLVSTETD (655 aa)) are vacuolar. The segment at 70–109 (YKTGSTFDSGCHRKPKKDGKSEGKKATENERGNEDLDDKE) is disordered. Residues 87 to 103 (DGKSEGKKATENERGNE) show a composition bias toward basic and acidic residues. 3 N-linked (GlcNAc...) asparagine glycosylation sites follow: asparagine 138, asparagine 369, and asparagine 447. The segment at 504–547 (KGSGGHRHDVPKGDCSLPSNEDKPHCTFKRKPRHYSKRSPSRTN) is disordered. Residues 529 to 543 (CTFKRKPRHYSKRSP) are compositionally biased toward basic residues. N-linked (GlcNAc...) asparagine glycans are attached at residues asparagine 591 and asparagine 616.

This sequence belongs to the endopolyphosphatase PPN1 family. It depends on a divalent metal cation as a cofactor. Post-translationally, processing by proteases in the vacuole may be required for activation.

Its subcellular location is the vacuole membrane. The catalysed reaction is [phosphate](n+1) + n H2O = (n+1) phosphate + n H(+). Catalyzes the hydrolysis of inorganic polyphosphate (polyP) chains of many hundreds of phosphate residues into shorter lengths. The protein is Endopolyphosphatase (PPN1) of Cryptococcus neoformans var. neoformans serotype D (strain JEC21 / ATCC MYA-565) (Filobasidiella neoformans).